The following is a 354-amino-acid chain: Dihydroorotate dehydrogenase (quinone) (354 aa).

FMN contacts are provided by residues 70–74 (AGFDK) and T94. Residue K74 participates in substrate binding. A substrate-binding site is contributed by 119–123 (NAMGF). The FMN site is built by N148 and N181. N181 lines the substrate pocket. Residue S184 is the Nucleophile of the active site. Residue N186 participates in substrate binding. Residues K217 and T245 each coordinate FMN. 246-247 (NT) provides a ligand contact to substrate. FMN-binding positions include G265, G294, and 315 to 316 (YS).

This sequence belongs to the dihydroorotate dehydrogenase family. Type 2 subfamily. Monomer. The cofactor is FMN.

It is found in the cell membrane. It carries out the reaction (S)-dihydroorotate + a quinone = orotate + a quinol. Its pathway is pyrimidine metabolism; UMP biosynthesis via de novo pathway; orotate from (S)-dihydroorotate (quinone route): step 1/1. Its function is as follows. Catalyzes the conversion of dihydroorotate to orotate with quinone as electron acceptor. The polypeptide is Dihydroorotate dehydrogenase (quinone) (Sulfurovum sp. (strain NBC37-1)).